The following is an 89-amino-acid chain: Insulin (89 aa).

Cystine bridges form between cysteine 7–cysteine 75, cysteine 19–cysteine 88, and cysteine 74–cysteine 79. The propeptide at 33–66 is c peptide; sequence DVGPLSAFRDLEPPLDTEMEDRFPYRQQLAGSKM.

Belongs to the insulin family. As to quaternary structure, heterodimer of a B chain and an A chain linked by two disulfide bonds.

The protein localises to the secreted. Its function is as follows. Insulin decreases blood glucose concentration. It increases cell permeability to monosaccharides, amino acids and fatty acids. It accelerates glycolysis, the pentose phosphate cycle, and glycogen synthesis in liver. The protein is Insulin (ins) of Callorhinchus milii (Ghost shark).